We begin with the raw amino-acid sequence, 76 residues long: Protein TraJ (76 aa).

It localises to the cytoplasm. In terms of biological role, this protein is essential for positively regulating the expression of transfer genes that are involved in the conjugal transfer of DNA between bacterial cells. The sequence is that of Protein TraJ (traJ) from Escherichia coli.